A 240-amino-acid polypeptide reads, in one-letter code: tRNA (guanine-N(1)-)-methyltransferase (240 aa).

S-adenosyl-L-methionine-binding positions include Gly111 and 130–135 (IGDYVI).

The protein belongs to the RNA methyltransferase TrmD family. Homodimer.

It is found in the cytoplasm. It carries out the reaction guanosine(37) in tRNA + S-adenosyl-L-methionine = N(1)-methylguanosine(37) in tRNA + S-adenosyl-L-homocysteine + H(+). Specifically methylates guanosine-37 in various tRNAs. The sequence is that of tRNA (guanine-N(1)-)-methyltransferase from Mycoplasma capricolum subsp. capricolum (strain California kid / ATCC 27343 / NCTC 10154).